The following is a 177-amino-acid chain: Peptidoglycan-associated lipoprotein (177 aa).

Residues M1–G32 form the signal peptide. C33 is lipidated: N-palmitoyl cysteine. C33 carries the S-diacylglycerol cysteine lipid modification. The 118-residue stretch at Q59–G176 folds into the OmpA-like domain.

This sequence belongs to the Pal lipoprotein family. In terms of assembly, the Tol-Pal system is composed of five core proteins: the inner membrane proteins TolA, TolQ and TolR, the periplasmic protein TolB and the outer membrane protein Pal. They form a network linking the inner and outer membranes and the peptidoglycan layer.

The protein resides in the cell outer membrane. Functionally, part of the Tol-Pal system, which plays a role in outer membrane invagination during cell division and is important for maintaining outer membrane integrity. The sequence is that of Peptidoglycan-associated lipoprotein from Agrobacterium fabrum (strain C58 / ATCC 33970) (Agrobacterium tumefaciens (strain C58)).